Consider the following 456-residue polypeptide: MKSVTVKQLLQTPRKFNNKQIKLSGWVKNKRASANIIFLAISDGSSINTLQAVVKQEDNPQVFSLLQTVNLASAVMVWGEIILTPKAKQPLELKLKQVSLLAQAESDYPLQKKEHSQEFFRSNAHLRVRAKTYFAVMKIRSVLSHAIFEYFFKNDFILVQSPILTSNDCEGAGETFVIKDSETFFNKTTFLTVSGQFGAEAFAQAFKKVFTFGPTFRAEKSHTNRHLSEFWMIEPEIAFANLKDLMQLIQNLIKFLIKKVMENASDELNVLAKQFSNDIISNLKTIISTKKFPIIEYSKALAILKESSDTKKTNFELNDFSFGIDLKTEHERFLCEQYFQNQPLFVINYPKELKAFYMKTNTDNKTVAAVDLLLPKIGEICGGSERESDLNQLKNRCQSLNIDTKSLNWYLDMRKWGYFASAGFGLGFDRLLAYICGLENIRDAIPFPRVHGTINF.

It belongs to the class-II aminoacyl-tRNA synthetase family. In terms of assembly, homodimer.

It is found in the cytoplasm. The enzyme catalyses tRNA(Asn) + L-asparagine + ATP = L-asparaginyl-tRNA(Asn) + AMP + diphosphate + H(+). This chain is Asparagine--tRNA ligase, found in Mycoplasma genitalium (strain ATCC 33530 / DSM 19775 / NCTC 10195 / G37) (Mycoplasmoides genitalium).